Reading from the N-terminus, the 240-residue chain is Aspartate/glutamate leucyltransferase (240 aa).

It belongs to the R-transferase family. Bpt subfamily.

The protein resides in the cytoplasm. The enzyme catalyses N-terminal L-glutamyl-[protein] + L-leucyl-tRNA(Leu) = N-terminal L-leucyl-L-glutamyl-[protein] + tRNA(Leu) + H(+). It carries out the reaction N-terminal L-aspartyl-[protein] + L-leucyl-tRNA(Leu) = N-terminal L-leucyl-L-aspartyl-[protein] + tRNA(Leu) + H(+). Functions in the N-end rule pathway of protein degradation where it conjugates Leu from its aminoacyl-tRNA to the N-termini of proteins containing an N-terminal aspartate or glutamate. The protein is Aspartate/glutamate leucyltransferase of Bordetella avium (strain 197N).